A 117-amino-acid polypeptide reads, in one-letter code: Large ribosomal subunit protein bL20 (117 aa).

Belongs to the bacterial ribosomal protein bL20 family.

Binds directly to 23S ribosomal RNA and is necessary for the in vitro assembly process of the 50S ribosomal subunit. It is not involved in the protein synthesizing functions of that subunit. This is Large ribosomal subunit protein bL20 from Streptococcus suis (strain 05ZYH33).